Consider the following 153-residue polypeptide: Transcriptional repressor NrdR (153 aa).

A zinc finger spans residues 3–34 (CPSCFHNGTRVLDSRPVDEGRSIRRRRECESC). Residues 49–139 (LIVVKKEGTR…VYRQFKDLNV (91 aa)) enclose the ATP-cone domain.

The protein belongs to the NrdR family. Zn(2+) serves as cofactor.

Its function is as follows. Negatively regulates transcription of bacterial ribonucleotide reductase nrd genes and operons by binding to NrdR-boxes. The polypeptide is Transcriptional repressor NrdR (Bacillus cytotoxicus (strain DSM 22905 / CIP 110041 / 391-98 / NVH 391-98)).